A 166-amino-acid polypeptide reads, in one-letter code: uncharacterized protein (166 aa).

The segment covering 73–88 (SKLNNNNNSNNNNKMA) has biased composition (low complexity). 2 disordered regions span residues 73 to 101 (SKLN…EKDK) and 126 to 166 (PQSS…EFNN). Over residues 89–101 (VDNKDNKDNEKDK) the composition is skewed to basic and acidic residues. Low complexity predominate over residues 134-154 (SPTHKSPSSSPKTISPVKVSP). The span at 155-166 (TSSPIKNPEFNN) shows a compositional bias: polar residues.

This is an uncharacterized protein from Dictyostelium discoideum (Social amoeba).